Consider the following 325-residue polypeptide: ATP phosphoribosyltransferase (325 aa).

It belongs to the ATP phosphoribosyltransferase family. Long subfamily. The cofactor is Mg(2+).

The protein resides in the cytoplasm. It carries out the reaction 1-(5-phospho-beta-D-ribosyl)-ATP + diphosphate = 5-phospho-alpha-D-ribose 1-diphosphate + ATP. Its pathway is amino-acid biosynthesis; L-histidine biosynthesis; L-histidine from 5-phospho-alpha-D-ribose 1-diphosphate: step 1/9. Feedback inhibited by histidine. Functionally, catalyzes the condensation of ATP and 5-phosphoribose 1-diphosphate to form N'-(5'-phosphoribosyl)-ATP (PR-ATP). Has a crucial role in the pathway because the rate of histidine biosynthesis seems to be controlled primarily by regulation of HisG enzymatic activity. The protein is ATP phosphoribosyltransferase of Rhodopseudomonas palustris (strain BisA53).